A 281-amino-acid polypeptide reads, in one-letter code: 40S small subunit processome assembly factor 1 (281 aa).

The segment at 29–141 (LGETEGETEQ…DEDEPAKNKT (113 aa)) is disordered. 2 positions are modified to phosphoserine: S67 and S75. At K172 the chain carries N6-acetyllysine. The interval 221–254 (ETDIFKKKKKKGRGQEDRRSKKSAPSILSSGQVG) is disordered. A Phosphoserine modification is found at S267.

Part of the small subunit (SSU) processome, composed of more than 70 proteins and the RNA chaperone small nucleolar RNA (snoRNA) U3.

Its subcellular location is the chromosome. The protein resides in the nucleus. It is found in the nucleolus. Its function is as follows. Part of the small subunit (SSU) processome, first precursor of the small eukaryotic ribosomal subunit. During the assembly of the SSU processome in the nucleolus, many ribosome biogenesis factors, an RNA chaperone and ribosomal proteins associate with the nascent pre-rRNA and work in concert to generate RNA folding, modifications, rearrangements and cleavage as well as targeted degradation of pre-ribosomal RNA by the RNA exosome. Prevents helicase DHX37 to be recruited before post-A1 state. This chain is 40S small subunit processome assembly factor 1, found in Mus musculus (Mouse).